Consider the following 421-residue polypeptide: Solute carrier family 35 member F3 (421 aa).

The segment at 25 to 53 is disordered; sequence EGEERPREPPGPAEAQAPAGTEAGGRTSR. The segment covering 37–49 has biased composition (low complexity); the sequence is AEAQAPAGTEAGG. The next 10 helical transmembrane spans lie at 66-86, 98-118, 149-169, 179-199, 208-228, 232-252, 266-286, 305-325, 326-346, and 352-372; these read VFWGVAVVFCVCASWAGSTQL, FTLTWFATNWNFLFFPLYYAG, VFFTKAAPFGVLWTLTNYLYL, DVSVLFCCNKSFVFLLSWIVL, IVAAILAIAGIVMMTYADGFH, VIGIALVVGSASMSALYKVLF, LFLSILGVFNILFITCIPVIL, LCGFSILLLTFNIVLNFGIAV, TYPTLMSLGIVLSVPVNAVVD, and IVFNGVRVIAIIIIGLGFLLL. Residues 394 to 421 form a disordered region; sequence KEETAESSGDLGTGPQSRSRRARPSFAR. The segment covering 411-421 has biased composition (basic residues); that stretch reads RSRRARPSFAR.

This sequence belongs to the SLC35F solute transporter family.

It localises to the membrane. It carries out the reaction thiamine(in) = thiamine(out). Mediates thiamine transport. The chain is Solute carrier family 35 member F3 (Slc35f3) from Mus musculus (Mouse).